A 367-amino-acid chain; its full sequence is MGPSNEHSSGHRNNFDLLRLFAACQVMFSHAWNWLHLGDPLNGTWVFDLLFSAPGVAIFFLISGFLVTDSYIRSSSAASFFVKRSLRIFPALFVNIAVMELALLVTGGLNVTGILQYLFYFTVYILTAARIWAVYFTYEPYTMSGFYGASDPSGVLWTLTVELTFYLTLPMLLEIWRRWKRAGALVVAVAALGSWVMAQHFNITDKYNPFLSVTAGPTFWIFSMGVLARLYWHRVSKIFEGKLLWWLATHLAITWWVAGTSAAFISINNAAPVDAFRIAVLAGLVLSAAHSLPRPNLLRRQDLSYGIYLYHMLVMHTLIAIGWVGHWWLWIVEPVGTVALAALSWALIEQPAMKLRTSLVARRLSVA.

The next 11 membrane-spanning stretches (helical) occupy residues 15–37, 46–66, 88–108, 109–129, 155–175, 183–203, 208–228, 245–265, 270–290, 312–332, and 335–355; these read FDLL…WLHL, VFDL…SGFL, IFPA…VTGG, LNVT…LTAA, VLWT…LLEI, GALV…HFNI, NPFL…GVLA, WWLA…AAFI, AAPV…SAAH, MLVM…LWIV, and VGTV…AMKL.

This sequence belongs to the acyltransferase 3 family.

It localises to the cell membrane. Not known. NodX allows Rhizobium leguminosarum biovar viciae strain TOM to nodulate Afghanistan peas. In Rhizobium leguminosarum bv. viciae, this protein is Nodulation protein 10 (nodX).